Reading from the N-terminus, the 129-residue chain is Small ribosomal subunit protein uS11 (129 aa).

It belongs to the universal ribosomal protein uS11 family. In terms of assembly, part of the 30S ribosomal subunit. Interacts with proteins S7 and S18. Binds to IF-3.

Functionally, located on the platform of the 30S subunit, it bridges several disparate RNA helices of the 16S rRNA. Forms part of the Shine-Dalgarno cleft in the 70S ribosome. The protein is Small ribosomal subunit protein uS11 of Haemophilus influenzae (strain ATCC 51907 / DSM 11121 / KW20 / Rd).